The following is a 253-amino-acid chain: Triosephosphate isomerase (253 aa).

13–15 (NWK) lines the substrate pocket. Residue His-100 is the Electrophile of the active site. Glu-169 (proton acceptor) is an active-site residue. Residues Gly-175, Ser-208, and 229–230 (GG) contribute to the substrate site.

The protein belongs to the triosephosphate isomerase family. In terms of assembly, homodimer.

It localises to the cytoplasm. It catalyses the reaction D-glyceraldehyde 3-phosphate = dihydroxyacetone phosphate. Its pathway is carbohydrate biosynthesis; gluconeogenesis. It functions in the pathway carbohydrate degradation; glycolysis; D-glyceraldehyde 3-phosphate from glycerone phosphate: step 1/1. Functionally, involved in the gluconeogenesis. Catalyzes stereospecifically the conversion of dihydroxyacetone phosphate (DHAP) to D-glyceraldehyde-3-phosphate (G3P). The protein is Triosephosphate isomerase of Synechococcus sp. (strain RCC307).